The following is a 373-amino-acid chain: MVVGVHRPTQLVIDRQALHDNIQAEVTRLASGCELFMVVKANGYGHGAVQVAQVAKEAGATGFCVAILDEALELRAAGFNEPILVLGVTEPEDAPLMAQQHISATVAATDWLVAADAYLALAQPTAPLQVHLGLDTGMGRIGFKTTTELTTAVSYLATHATLNFEGIFTHFATADSPDETYFKQQVAKWQTLTAALKERPRYVHVSNSATSLWHAACNDNMVRFGVAGYGLNPSGTAIPAPYALKPALSLTSQLVHSKQVVAGESVGYGATYTAQQTEWVGTVPIGYADGYERRLQGFHVLVDGQACEIIGRVCMDQLMIRLPHDYARGTRVTLIGRDGDHVITLQEMADYCQTIHYELACGFTSRLPRVYRH.

K40 acts as the Proton acceptor; specific for D-alanine in catalysis. K40 is subject to N6-(pyridoxal phosphate)lysine. Substrate is bound at residue R140. Y268 serves as the catalytic Proton acceptor; specific for L-alanine. Residue M315 coordinates substrate.

The protein belongs to the alanine racemase family. Pyridoxal 5'-phosphate serves as cofactor.

The enzyme catalyses L-alanine = D-alanine. Its pathway is amino-acid biosynthesis; D-alanine biosynthesis; D-alanine from L-alanine: step 1/1. Catalyzes the interconversion of L-alanine and D-alanine. May also act on other amino acids. This is Alanine racemase (alr) from Levilactobacillus brevis (strain ATCC 367 / BCRC 12310 / CIP 105137 / JCM 1170 / LMG 11437 / NCIMB 947 / NCTC 947) (Lactobacillus brevis).